A 255-amino-acid polypeptide reads, in one-letter code: Keratin-associated protein 10-2 (255 aa).

22 repeat units span residues 26-30 (CCELP), 36-40 (CCAPA), 57-61 (CCQAA), 79-83 (CCQQS), 89-93 (CCTSS), 99-103 (CCVPV), 104-108 (CCKPV), 109-113 (CCVPV), 114-118 (CCGAS), 120-124 (CCQQS), 130-134 (CCASS), 145-149 (CCKAV), 150-154 (CCVPT), 162-166 (CCQQS), 172-176 (CCTSS), 182-186 (CCVSV), 187-191 (CCKPV), 192-196 (CCKSI), 197-201 (CCVPV), 209-213 (CCQQS), 219-223 (CCTSS), and 224-228 (CCRPS). The tract at residues 26-228 (CCELPCGTPS…CCTSSCCRPS (203 aa)) is 22 X 5 AA repeats of C-C-X(3).

Belongs to the KRTAP type 10 family. As to quaternary structure, interacts with hair keratins. Restricted to a narrow region of the hair fiber cuticle, lying approximately 20 cell layers above the apex of the dermal papilla of the hair root; not detected in any other tissues.

In terms of biological role, in the hair cortex, hair keratin intermediate filaments are embedded in an interfilamentous matrix, consisting of hair keratin-associated proteins (KRTAP), which are essential for the formation of a rigid and resistant hair shaft through their extensive disulfide bond cross-linking with abundant cysteine residues of hair keratins. The matrix proteins include the high-sulfur and high-glycine-tyrosine keratins. The chain is Keratin-associated protein 10-2 (KRTAP10-2) from Homo sapiens (Human).